Here is a 697-residue protein sequence, read N- to C-terminus: tRNA 5-methylaminomethyl-2-thiouridine biosynthesis bifunctional protein MnmC (697 aa).

The tRNA (mnm(5)s(2)U34)-methyltransferase stretch occupies residues methionine 1–alanine 269. The segment at isoleucine 287 to methionine 697 is FAD-dependent cmnm(5)s(2)U34 oxidoreductase.

The protein in the N-terminal section; belongs to the methyltransferase superfamily. tRNA (mnm(5)s(2)U34)-methyltransferase family. It in the C-terminal section; belongs to the DAO family. FAD serves as cofactor.

It localises to the cytoplasm. The enzyme catalyses 5-aminomethyl-2-thiouridine(34) in tRNA + S-adenosyl-L-methionine = 5-methylaminomethyl-2-thiouridine(34) in tRNA + S-adenosyl-L-homocysteine + H(+). Functionally, catalyzes the last two steps in the biosynthesis of 5-methylaminomethyl-2-thiouridine (mnm(5)s(2)U) at the wobble position (U34) in tRNA. Catalyzes the FAD-dependent demodification of cmnm(5)s(2)U34 to nm(5)s(2)U34, followed by the transfer of a methyl group from S-adenosyl-L-methionine to nm(5)s(2)U34, to form mnm(5)s(2)U34. This Shewanella frigidimarina (strain NCIMB 400) protein is tRNA 5-methylaminomethyl-2-thiouridine biosynthesis bifunctional protein MnmC.